A 148-amino-acid polypeptide reads, in one-letter code: Large ribosomal subunit protein uL15 (148 aa).

Over residues 1 to 10 (MQLHNLEYKK) the composition is skewed to basic and acidic residues. Residues 1–42 (MQLHNLEYKKGSRNHKEKRVGRGHGSGLGKTSGRGQDGQKAR) are disordered. Basic residues predominate over residues 11–22 (GSRNHKEKRVGR). Residues 23 to 36 (GHGSGLGKTSGRGQ) are compositionally biased toward gly residues.

This sequence belongs to the universal ribosomal protein uL15 family. Part of the 50S ribosomal subunit.

Binds to the 23S rRNA. This is Large ribosomal subunit protein uL15 from Ureaplasma parvum serovar 3 (strain ATCC 27815 / 27 / NCTC 11736).